We begin with the raw amino-acid sequence, 83 residues long: Small ribosomal subunit protein uS17 (83 aa).

This sequence belongs to the universal ribosomal protein uS17 family. In terms of assembly, part of the 30S ribosomal subunit.

One of the primary rRNA binding proteins, it binds specifically to the 5'-end of 16S ribosomal RNA. The sequence is that of Small ribosomal subunit protein uS17 from Campylobacter jejuni subsp. jejuni serotype O:6 (strain 81116 / NCTC 11828).